Reading from the N-terminus, the 1279-residue chain is Sterol regulatory element-binding protein cleavage-activating protein (1279 aa).

The Cytoplasmic portion of the chain corresponds to 1–18 (MTLTERLREKISQAFYNH). A helical transmembrane segment spans residues 19–39 (GLLCASYPIPIILFTGLCILA). Residues 40-279 (CCYPLLKLPL…SLVHVHFKEE (240 aa)) lie on the Lumenal side of the membrane. Residues 46–284 (KLPLPGTGPV…HFKEEIGIAE (239 aa)) are loop-1. The interval 60 to 81 (PVKDYSPPPSASDHKPGEPSEQ) is disordered. Asn263 carries N-linked (GlcNAc...) asparagine glycosylation. A helical membrane pass occupies residues 280 to 300 (IGIAELIPLVTTYIILFAYIY). In terms of domain architecture, SSD spans 284-442 (ELIPLVTTYI…MPFFTTVLSI (159 aa)). At 301–312 (FSTRKIDMVKSK) the chain is on the cytoplasmic side. A helical transmembrane segment spans residues 313–333 (WGLALAAVVTVLSSLLMSVGL). At 334-344 (CTLFGLTPTLN) the chain is on the lumenal side. A helical membrane pass occupies residues 345–365 (GGEIFPYLVVVIGLENVLVLT). The Cytoplasmic segment spans residues 366-401 (KSVVSTPVDLEVKLRIAQGLSSESWSIMKNMATELG). The helical transmembrane segment at 402-422 (IILIGYFTLVPAIQEFCLFAV) threads the bilayer. A topological domain (lumenal) is located at residue Val423. The helical transmembrane segment at 424 to 444 (GLVSDFFLQMPFFTTVLSIDI) threads the bilayer. The Cytoplasmic portion of the chain corresponds to 445–518 (RRMELADLNK…FLARTRLAQR (74 aa)). Positions 447–452 (MELADL) match the ER export signal motif. Residues Lys454 and Lys466 each participate in a glycyl lysine isopeptide (Lys-Gly) (interchain with G-Cter in ubiquitin) cross-link. The chain crosses the membrane as a helical span at residues 519–539 (LIMAGTVVWIGILAYTDPAGL). Positions 535–710 (DPAGLRTYLA…QAHRDVTLYK (176 aa)) are loop-7. The Lumenal segment spans residues 540–707 (RTYLAAQVTE…GVAQAHRDVT (168 aa)). Residues 588–617 (LENQTLPGEPPEPGGQAEGVHDSPAPEVTW) form a disordered region. 2 N-linked (GlcNAc...) asparagine glycosylation sites follow: Asn590 and Asn641. Positions 668–696 (EGRHPQDSRSAWSPPQPAQGGLWDAGPKG) are disordered. The helical transmembrane segment at 708-728 (LYKVAALGLATGILLVLLLCL) threads the bilayer. Residues 729 to 1279 (YRVLCPRNYG…YVPSVLEKLD (551 aa)) are Cytoplasmic-facing. Residues 730-1279 (RVLCPRNYGQ…YVPSVLEKLD (550 aa)) are interaction with SREBF2. Residues 770-810 (VLRGHLMDIECLASDGMLLVSCCLAGHVCVWDAQTGDCLTR) form a WD 1 repeat. Phosphoserine occurs at positions 821, 837, 843, and 850. Disordered regions lie at residues 834–868 (ERLS…LFGD), 883–903 (HPRL…CRRT), and 925–959 (VPMH…GSPS). Residues 885-896 (RLPELDHPEPRH) are compositionally biased toward basic and acidic residues. Positions 929–944 (TPAPRPPSPGPTPPQT) are enriched in pro residues. Residue Ser936 is modified to Phosphoserine. 2 WD repeats span residues 952–1002 (PPEK…LRCS) and 1005–1042 (EVAS…ALSP). Position 1051 is an omega-N-methylarginine (Arg1051). WD repeat units lie at residues 1077–1114 (AHQK…CLFT), 1117–1155 (GHSG…RVSH), 1158–1195 (AHRG…KLYS), and 1197–1235 (QQDL…LLQT).

This sequence belongs to the WD repeat SCAP family. As to quaternary structure, membrane region forms a homotetramer. Component of the SCAP-SREBP complex (composed of SCAP and SREBF1/SREBP1 or SREBF2/SREBP2); interacts with SREBF1/SREBP1 or SREBF2/SREBP2 through its C-terminal cytoplasmic domain. Forms a ternary complex with INSIG1 or INSIG2 through its transmembrane domains at high sterol concentrations. Interacts with PAQR3; the interaction anchors the SCAP-SREBP complex to the Golgi apparatus in low cholesterol conditions. Interacts with the SEC23-SEC24 complex in a SAR1-GTP-dependent manner through an ER export signal in its third cytoplasmic loop. Interacts with RNF139; the interaction inhibits the interaction of SCAP with SEC24B and hampering the ER to Golgi transport of the SCAP-SREBP complex. Interacts with SPRING1. Ubiquitinated at Lys-454 and Lys-466. RNF145 triggers ubiquitination of SCAP, likely inhibiting SCAP-SREBP complex transport to the Golgi apparatus and the subsequent processing/maturation of SREBF2/SREBP2. Widely expressed with higher levels in lung, kidney, gut, brain and adipose tissue. As to expression, expressed in liver and muscle. Isoform 3 expressed in testis. In terms of tissue distribution, expressed in testis.

It is found in the endoplasmic reticulum membrane. It localises to the golgi apparatus membrane. The protein localises to the cytoplasmic vesicle. Its subcellular location is the COPII-coated vesicle membrane. Functionally, escort protein required for cholesterol as well as lipid homeostasis. Regulates export of the SCAP-SREBP complex from the endoplasmic reticulum to the Golgi upon low cholesterol, thereby regulating the processing of sterol regulatory element-binding proteins (SREBPs) SREBF1/SREBP1 and SREBF2/SREBP2. At high sterol concentrations, formation of a ternary complex with INSIG (INSIG1 or INSIG2) leads to mask the ER export signal in SCAP, promoting retention of the complex in the endoplasmic reticulum. Low sterol concentrations trigger release of INSIG, a conformational change in the SSD domain of SCAP, unmasking of the ER export signal, promoting recruitment into COPII-coated vesicles and transport of the SCAP-SREBP to the Golgi: in the Golgi, SREBPs are then processed, releasing the transcription factor fragment of SREBPs from the membrane, its import into the nucleus and up-regulation of LDLR, INSIG1 and the mevalonate pathway. Binds cholesterol via its SSD domain. The polypeptide is Sterol regulatory element-binding protein cleavage-activating protein (Sus scrofa (Pig)).